The primary structure comprises 37 residues: Large ribosomal subunit protein bL36 (37 aa).

The protein belongs to the bacterial ribosomal protein bL36 family.

The chain is Large ribosomal subunit protein bL36 from Nocardioides sp. (strain ATCC BAA-499 / JS614).